We begin with the raw amino-acid sequence, 346 residues long: Biotin synthase (346 aa).

The Radical SAM core domain maps to 38–256 (RQVQVSTLLS…IAVARIMMPT (219 aa)). [4Fe-4S] cluster-binding residues include Cys53, Cys57, and Cys60. Residues Cys97, Cys128, Cys188, and Arg260 each contribute to the [2Fe-2S] cluster site.

This sequence belongs to the radical SAM superfamily. Biotin synthase family. In terms of assembly, homodimer. [4Fe-4S] cluster serves as cofactor. It depends on [2Fe-2S] cluster as a cofactor.

It carries out the reaction (4R,5S)-dethiobiotin + (sulfur carrier)-SH + 2 reduced [2Fe-2S]-[ferredoxin] + 2 S-adenosyl-L-methionine = (sulfur carrier)-H + biotin + 2 5'-deoxyadenosine + 2 L-methionine + 2 oxidized [2Fe-2S]-[ferredoxin]. The protein operates within cofactor biosynthesis; biotin biosynthesis; biotin from 7,8-diaminononanoate: step 2/2. In terms of biological role, catalyzes the conversion of dethiobiotin (DTB) to biotin by the insertion of a sulfur atom into dethiobiotin via a radical-based mechanism. The sequence is that of Biotin synthase from Escherichia coli O6:H1 (strain CFT073 / ATCC 700928 / UPEC).